The sequence spans 660 residues: Protein SCARECROW 2 (660 aa).

Disordered regions lie at residues 1–33 and 190–286; these read MGSS…ITSL and SDPA…KQRD. Positions 192 to 229 are enriched in pro residues; the sequence is PAPPPPPPSHPALLPPDATAPPPPPTSVAALPPPPPAQ. Positions 259–272 are enriched in low complexity; that stretch reads AAAAAAAAAAAAAA. Residues 262–289 adopt a coiled-coil conformation; the sequence is AAAAAAAAAAAAKERKEEQRRKQRDEEG. A compositionally biased stretch (basic and acidic residues) spans 273-286; the sequence is AKERKEEQRRKQRD. The GRAS domain occupies 283-653; it reads KQRDEEGLHL…LCLLTASAWR (371 aa). The tract at residues 290-354 is leucine repeat I (LRI); it reads LHLLTLLLQC…VSSCLGLYAP (65 aa). The short motif at 297-301 is the LxCxE motif element; it reads LQCAE. Residues 373-438 form a VHIID region; that stretch reads FQVFNGISPF…GGPPRVRLTG (66 aa). A VHIID motif is present at residues 404-408; it reads VHIID. Positions 448–480 are leucine repeat II (LRII); the sequence is ATGKRLSDFADTLGLPFEFCPVADKAGNLDPEK. Residues 489–576 are PFYRE; it reads VAVHWLRHSL…QQLLSREIRN (88 aa). Positions 579–653 are SAW; that stretch reads AVGGPARTGD…LCLLTASAWR (75 aa).

It belongs to the GRAS family.

The protein resides in the cytoplasm. Probable transcription factor involved in asmmetric cell division in the cortex/endodermis progenitor cell and in the process of stomata and ligule formation in leaves. The chain is Protein SCARECROW 2 (SCR2) from Oryza sativa subsp. indica (Rice).